A 474-amino-acid polypeptide reads, in one-letter code: Nuclear receptor ROR-alpha B (474 aa).

Residues 14–89 (SIPCKICGDK…VGMSRDAVKF (76 aa)) constitute a DNA-binding region (nuclear receptor). NR C4-type zinc fingers lie at residues 17 to 37 (CKICGDKSSGIHYGVITCEGC) and 53 to 72 (CPRQKSCLIDRTSRNRCQHC). The span at 98-124 (DSLFAEVQKHRQQQQDDKTGDESEKNQ) shows a compositional bias: basic and acidic residues. The disordered stretch occupies residues 98-144 (DSLFAEVQKHRQQQQDDKTGDESEKNQESQAPGEAEPLTPSYALSSS). The NR LBD domain occupies 223–461 (DLEHLSENIC…TRFPPLYKEL (239 aa)). The interval 450-461 (VHTRFPPLYKEL) is AF-2.

This sequence belongs to the nuclear hormone receptor family.

It is found in the nucleus. Nuclear receptor that binds DNA as a monomer to ROR response elements (RORE). Required for proper cerebellum development. The polypeptide is Nuclear receptor ROR-alpha B (rorab) (Danio rerio (Zebrafish)).